Consider the following 405-residue polypeptide: Probable tRNA sulfurtransferase (405 aa).

A THUMP domain is found at 60 to 165 (DKIDQRLKLV…QDAIYISNQL (106 aa)). ATP is bound by residues 183–184 (ML), 208–209 (HF), Arg265, Gly287, and Gln296.

The protein belongs to the ThiI family.

It is found in the cytoplasm. It catalyses the reaction [ThiI sulfur-carrier protein]-S-sulfanyl-L-cysteine + a uridine in tRNA + 2 reduced [2Fe-2S]-[ferredoxin] + ATP + H(+) = [ThiI sulfur-carrier protein]-L-cysteine + a 4-thiouridine in tRNA + 2 oxidized [2Fe-2S]-[ferredoxin] + AMP + diphosphate. It carries out the reaction [ThiS sulfur-carrier protein]-C-terminal Gly-Gly-AMP + S-sulfanyl-L-cysteinyl-[cysteine desulfurase] + AH2 = [ThiS sulfur-carrier protein]-C-terminal-Gly-aminoethanethioate + L-cysteinyl-[cysteine desulfurase] + A + AMP + 2 H(+). It participates in cofactor biosynthesis; thiamine diphosphate biosynthesis. Its function is as follows. Catalyzes the ATP-dependent transfer of a sulfur to tRNA to produce 4-thiouridine in position 8 of tRNAs, which functions as a near-UV photosensor. Also catalyzes the transfer of sulfur to the sulfur carrier protein ThiS, forming ThiS-thiocarboxylate. This is a step in the synthesis of thiazole, in the thiamine biosynthesis pathway. The sulfur is donated as persulfide by IscS. In Lactobacillus gasseri (strain ATCC 33323 / DSM 20243 / BCRC 14619 / CIP 102991 / JCM 1131 / KCTC 3163 / NCIMB 11718 / NCTC 13722 / AM63), this protein is Probable tRNA sulfurtransferase.